The following is a 403-amino-acid chain: Chalcone synthase 2 (403 aa).

A CoA-binding site is contributed by 59–66 (RFQRMCES). The active-site Acyl-thioester intermediate is cysteine 168. 220–221 (GD) is a binding site for substrate. Alanine 313 lines the CoA pocket.

The protein belongs to the thiolase-like superfamily. Chalcone/stilbene synthases family. Homodimer.

It catalyses the reaction (E)-4-coumaroyl-CoA + 3 malonyl-CoA + 3 H(+) = 2',4,4',6'-tetrahydroxychalcone + 3 CO2 + 4 CoA. It functions in the pathway secondary metabolite biosynthesis; flavonoid biosynthesis. The primary product of this enzyme is 4,2',4',6'-tetrahydroxychalcone (also termed naringenin-chalcone or chalcone) which can under specific conditions spontaneously isomerize into naringenin. This chain is Chalcone synthase 2 (CHS2), found in Oryza sativa subsp. japonica (Rice).